Here is a 76-residue protein sequence, read N- to C-terminus: UPF0291 protein MW2494 (76 aa).

The protein belongs to the UPF0291 family.

The protein resides in the cytoplasm. This is UPF0291 protein MW2494 from Staphylococcus aureus (strain MW2).